Here is a 473-residue protein sequence, read N- to C-terminus: Photosystem II CP43 reaction center protein (473 aa).

The propeptide occupies 1–14; it reads MKTLYSLRRFYPVE. At Thr-15 the chain carries N-acetylthreonine. The residue at position 15 (Thr-15) is a Phosphothreonine. A run of 5 helical transmembrane segments spans residues 69–93, 134–155, 178–200, 255–275, and 291–312; these read LFEVAHFVPEKPMYEQGLILLPHLA, LLGPETLEESFPFFGYVWKDRN, KALYFGGVYDTWAPGGGDVRKIT, KPFAWARRAFVWSGEAYLSYS, and WFNNTAYPSEFYGPTGPEASQA. [CaMn4O5] cluster is bound at residue Glu-367. Residues 447-471 form a helical membrane-spanning segment; it reads RARAAAAGFEKGIDRDFEPVLSMTP.

Belongs to the PsbB/PsbC family. PsbC subfamily. As to quaternary structure, PSII is composed of 1 copy each of membrane proteins PsbA, PsbB, PsbC, PsbD, PsbE, PsbF, PsbH, PsbI, PsbJ, PsbK, PsbL, PsbM, PsbT, PsbX, PsbY, PsbZ, Psb30/Ycf12, at least 3 peripheral proteins of the oxygen-evolving complex and a large number of cofactors. It forms dimeric complexes. Binds multiple chlorophylls and provides some of the ligands for the Ca-4Mn-5O cluster of the oxygen-evolving complex. It may also provide a ligand for a Cl- that is required for oxygen evolution. PSII binds additional chlorophylls, carotenoids and specific lipids. serves as cofactor.

It localises to the plastid. Its subcellular location is the chloroplast thylakoid membrane. Its function is as follows. One of the components of the core complex of photosystem II (PSII). It binds chlorophyll and helps catalyze the primary light-induced photochemical processes of PSII. PSII is a light-driven water:plastoquinone oxidoreductase, using light energy to abstract electrons from H(2)O, generating O(2) and a proton gradient subsequently used for ATP formation. This Piper cenocladum (Ant piper) protein is Photosystem II CP43 reaction center protein.